The following is a 179-amino-acid chain: Putative 5'(3')-deoxyribonucleotidase (179 aa).

The active-site Nucleophile is Asp9. Mg(2+) is bound by residues Asp9, Asp11, and Asp135. Asp11 (proton donor) is an active-site residue.

It belongs to the 5'(3')-deoxyribonucleotidase family. Mg(2+) is required as a cofactor.

Dephosphorylates the 5' and 2'(3')-phosphates of deoxyribonucleotides. In Staphylococcus epidermidis (strain ATCC 35984 / DSM 28319 / BCRC 17069 / CCUG 31568 / BM 3577 / RP62A), this protein is Putative 5'(3')-deoxyribonucleotidase.